A 112-amino-acid polypeptide reads, in one-letter code: cAMP-regulated phosphoprotein 19 (112 aa).

A compositionally biased stretch (low complexity) spans 1-11; that stretch reads MSAESPEPASA. Residues 1–48 form a disordered region; that stretch reads MSAESPEPASAEEQKEMEDKVISPEKAEEAKLKARYPHLGQKPGGSDF. Position 2 is an N-acetylserine (Ser-2). A compositionally biased stretch (basic and acidic residues) spans 12–32; that stretch reads EEQKEMEDKVISPEKAEEAKL. Ser-62 and Ser-104 each carry phosphoserine; by GWL. The interval 73 to 112 is disordered; sequence KNKQLPTAAPDKTEVTGDHIPTPQDLPQRKPSLVASKLAG. The residue at position 104 (Ser-104) is a Phosphoserine; by PKA.

This sequence belongs to the endosulfine family. In terms of assembly, interacts (when phosphorylated at Ser-62) with PPP2R2D. Post-translationally, phosphorylation at Ser-62 by MASTL/GWL during mitosis is essential for interaction with PPP2R2D (PR55-delta) and subsequent inactivation of PP2A.

It is found in the cytoplasm. Functionally, protein phosphatase inhibitor that specifically inhibits protein phosphatase 2A (PP2A) during mitosis. Inhibition of PP2A is enhanced when ARPP19 is phosphorylated. When phosphorylated at Ser-62 during mitosis, specifically interacts with PPP2R2D (PR55-delta) and inhibits its activity, leading to inactivation of PP2A, an essential condition to keep cyclin-B1-CDK1 activity high during M phase. This Gallus gallus (Chicken) protein is cAMP-regulated phosphoprotein 19 (ARPP19).